A 292-amino-acid chain; its full sequence is UPF0282 protein MJ1629 (292 aa).

This sequence belongs to the UPF0282 family.

This Methanocaldococcus jannaschii (strain ATCC 43067 / DSM 2661 / JAL-1 / JCM 10045 / NBRC 100440) (Methanococcus jannaschii) protein is UPF0282 protein MJ1629.